A 506-amino-acid chain; its full sequence is Trans-cinnamate 4-monooxygenase (506 aa).

The helical transmembrane segment at 3–23 (LLLLEKALLGLFAAAVVAIAV) threads the bilayer. Residues 213-218 (RSRLAQ) and alanine 306 contribute to the (E)-cinnamate site. Cysteine 447 is a binding site for heme.

The protein belongs to the cytochrome P450 family. The cofactor is heme.

The protein resides in the membrane. It carries out the reaction (E)-cinnamate + reduced [NADPH--hemoprotein reductase] + O2 = (E)-4-coumarate + oxidized [NADPH--hemoprotein reductase] + H2O + H(+). It functions in the pathway phenylpropanoid metabolism; trans-4-coumarate biosynthesis; trans-4-coumarate from trans-cinnamate: step 1/1. In terms of biological role, catalyzes the first oxidative step of the phenylpropanoid pathway in higher plants by transforming trans-cinnamate into p-coumarate. The compounds formed by this pathway are essential components for lignification, pollination, and defense against ultraviolet light, predators and pathogens. This is Trans-cinnamate 4-monooxygenase (CYP73A2) from Ruta graveolens (Common rue).